We begin with the raw amino-acid sequence, 378 residues long: 4-hydroxy-3-methylbut-2-en-1-yl diphosphate synthase (flavodoxin) (378 aa).

Cys-268, Cys-271, Cys-303, and Glu-310 together coordinate [4Fe-4S] cluster.

This sequence belongs to the IspG family. [4Fe-4S] cluster serves as cofactor.

It catalyses the reaction (2E)-4-hydroxy-3-methylbut-2-enyl diphosphate + oxidized [flavodoxin] + H2O + 2 H(+) = 2-C-methyl-D-erythritol 2,4-cyclic diphosphate + reduced [flavodoxin]. It participates in isoprenoid biosynthesis; isopentenyl diphosphate biosynthesis via DXP pathway; isopentenyl diphosphate from 1-deoxy-D-xylulose 5-phosphate: step 5/6. Its function is as follows. Converts 2C-methyl-D-erythritol 2,4-cyclodiphosphate (ME-2,4cPP) into 1-hydroxy-2-methyl-2-(E)-butenyl 4-diphosphate. The sequence is that of 4-hydroxy-3-methylbut-2-en-1-yl diphosphate synthase (flavodoxin) from Corynebacterium glutamicum (strain ATCC 13032 / DSM 20300 / JCM 1318 / BCRC 11384 / CCUG 27702 / LMG 3730 / NBRC 12168 / NCIMB 10025 / NRRL B-2784 / 534).